Reading from the N-terminus, the 780-residue chain is ATP-dependent DNA helicase RecG (780 aa).

Domain stretches follow at residues 1-350 (MLCS…GGIP), 351-549 (KKIE…EMPP), and 550-780 (GRKE…IEVG). The wedge domain stretch occupies residues 154–252 (RKIFKLNDLL…VTPKEGEYVR (99 aa)). Residues Phe367, Leu369, Gly399, Ser400, Gly401, Lys402, Thr403, and Arg436 each coordinate ATP. A Helicase ATP-binding domain is found at 383 to 544 (DMISEKPMNR…FYGDLDVTVI (162 aa)). The DEAH box signature appears at 497-500 (DEQH). The Helicase C-terminal domain occupies 563-728 (RVNEVYEFVR…EYDLKTRGPG (166 aa)).

The protein belongs to the helicase family. RecG subfamily. As to quaternary structure, monomer.

The enzyme catalyses Couples ATP hydrolysis with the unwinding of duplex DNA by translocating in the 3'-5' direction.. It carries out the reaction ATP + H2O = ADP + phosphate + H(+). Functionally, plays a critical role in recombination and DNA repair. Helps process Holliday junction intermediates to mature products by catalyzing branch migration. Has replication fork (Y-DNA) regression activity, unwinds stalled or blocked replication forks to make a HJ that can be resolved. Has a DNA unwinding activity characteristic of a DNA helicase with 3'-5' polarity. Might be a DNA translocase rather than a bona fide helicase. This is ATP-dependent DNA helicase RecG from Thermotoga maritima (strain ATCC 43589 / DSM 3109 / JCM 10099 / NBRC 100826 / MSB8).